The sequence spans 311 residues: Systemic RNA interference defective protein 2 (311 aa).

Positions 1-20 (MPRFVYFCFALIALLPISWT) are cleaved as a signal peptide. Residues 21–188 (MDGILITDVE…EETKTVVNKN (168 aa)) are Extracellular-facing. The helical transmembrane segment at 189 to 209 (GGAVAVAVIEGIALIAILAFL) threads the bilayer. Over 210-311 (GYRTMVNHKL…NDPFATLESW (102 aa)) the chain is Cytoplasmic. The span at 287 to 301 (NSSAAQPSTTSNGQF) shows a compositional bias: polar residues. Residues 287–311 (NSSAAQPSTTSNGQFNDPFATLESW) form a disordered region.

In terms of tissue distribution, expressed in the intestinal lumen. Also present, at lower levels, in the excretory duct cells.

The protein localises to the apical cell membrane. It localises to the cytoplasm. Functionally, plays a role in RNA-mediated gene silencing by mediating endocytic uptake of double-stranded RNA (dsRNA) ingested from the environment into intestinal cells from the intestinal lumen. Selective for dsRNAs of at least 50 bp. Required for avoidance behavior induced by small RNAs derived from pathogenic bacteria such as P.aeruginosa. This Caenorhabditis elegans protein is Systemic RNA interference defective protein 2.